Reading from the N-terminus, the 628-residue chain is MSTLCAFPVPYSTIEVLNIVLPYRTYSARLLYLHAPLGNHLPFCHRSYNVLHLRQDCDSHMYSAGNDVRLSQEAVTMSDQRSHDTTADQSARDASSLDTRKIHGFPWFLLVISVLSSIFLYALDNTIVADIIPAIANDFSSINDLGWLSVGFVIGGVAVIMPLGKLYGILNTKWLYITSVVLFMAASAVCGAAPDMNAEIVGRVFAGAGGIGMYIGTMILLSINTSDQERPAYLSLVGLVWGIGTVLGPVIGGSFEKVDWRWAFYLNLVIGALLFPVWFFLLPSFHPAKHLSLNKRLSQFDFVGAILSIGAFVTTIMPINFGGTTYEWNSGTIIALFVVSGVLWIAFAVQQSLTLFTTPADRMFPVQFLKNKEAMLLFICAAAINSAVFVPIYFIPIYFQFSRGDGALDSAIRLLPLIFLLCATILVNGKLMSRFGYYMPWYLVGGVFCLIANVFLCELHPVAAVLVRYTDYKTALLDATTSQSYIYGFEALLGLGAGGSVQAGYAVIQTVVPATDLGYAVSFIMIAQIGGIALGLACASAVFINGATNSLRVLLPLLSDSELQSAISGTGGRFLETLDDNTRVQVIDAVVNNLAKAFIVAYAGAAVSLVASLGFSRKRVFLPTAAAA.

Helical transmembrane passes span 102-122, 150-170, 174-194, 204-224, 232-252, 262-282, 302-322, 329-349, 375-395, 407-427, 435-455, 488-508, 524-544, and 595-615; these read IHGFPWFLLVISVLSSIFLYA, VGFVIGGVAVIMPLGKLYGIL, WLYITSVVLFMAASAVCGAAP, VFAGAGGIGMYIGTMILLSIN, AYLSLVGLVWGIGTVLGPVIG, WAFYLNLVIGALLFPVWFFLL, FVGAILSIGAFVTTIMPINFG, NSGTIIALFVVSGVLWIAFAV, MLLFICAAAINSAVFVPIYFI, ALDSAIRLLPLIFLLCATILV, FGYYMPWYLVGGVFCLIANVF, GFEALLGLGAGGSVQAGYAVI, IMIAQIGGIALGLACASAVFI, and AKAFIVAYAGAAVSLVASLGF.

This sequence belongs to the major facilitator superfamily. TCR/Tet family.

The protein localises to the cell membrane. In terms of biological role, MFS-type transporter; part of the gene cluster that mediates the biosynthesis of phomenoic acid, a long chain aliphatic carboxylic acid that does not appear to be essential for pathogenicity but may play a role in allowing to outcompete other fungi in the environmental niche via its antifungal properties. Is probably involved in the efflux of phomenoic acid. The protein is Phomenoic acid biosynthesis cluster MFS-type transporter of Leptosphaeria maculans (strain JN3 / isolate v23.1.3 / race Av1-4-5-6-7-8) (Blackleg fungus).